Consider the following 499-residue polypeptide: Uridine-cytidine kinase A (499 aa).

Residues 1 to 44 (MSDNSTTKVTTNDSPSLTTTTSTTTAPTTTTTTTTTPTHNHDTT) are disordered. The segment covering 10 to 38 (TTNDSPSLTTTTSTTTAPTTTTTTTTTPT) has biased composition (low complexity). 78 to 85 (GGSASGKT) lines the ATP pocket.

The protein belongs to the uridine kinase family.

It catalyses the reaction uridine + ATP = UMP + ADP + H(+). The enzyme catalyses cytidine + ATP = CMP + ADP + H(+). The protein operates within pyrimidine metabolism; CTP biosynthesis via salvage pathway; CTP from cytidine: step 1/3. It functions in the pathway pyrimidine metabolism; UMP biosynthesis via salvage pathway; UMP from uridine: step 1/1. Catalyzes the conversion of uridine into uridine monophosphate and cytidine into cytidine monophosphate in the pyrimidine salvage pathway. The chain is Uridine-cytidine kinase A (udkA) from Dictyostelium discoideum (Social amoeba).